A 458-amino-acid chain; its full sequence is Ammonium transporter Rh type B (458 aa).

Residues 1 to 11 lie on the Cytoplasmic side of the membrane; it reads MTDAATNMRLK. A helical membrane pass occupies residues 12–32; the sequence is LPITCFILEIILIILFGTLVQ. The Extracellular segment spans residues 33 to 58; that stretch reads YDYETDAKEWHNTSHQDYENDFYFRY. N-linked (GlcNAc...) asparagine glycosylation occurs at N44. The chain crosses the membrane as a helical span at residues 59–79; the sequence is PSFQDVHVMIFVGFGFLMTFL. The Cytoplasmic portion of the chain corresponds to 80–83; sequence QRYG. The helical transmembrane segment at 84–104 threads the bilayer; the sequence is FGSVGFNFLIAAFSLQWATLM. The Extracellular portion of the chain corresponds to 105–121; the sequence is QGFFHGMHGGKIHIGVE. The helical transmembrane segment at 122–142 threads the bilayer; sequence SMINADFCTGSVLISFGAVLG. Residues 143 to 151 are Cytoplasmic-facing; sequence KTSPIQLLT. Residues 152 to 172 form a helical membrane-spanning segment; sequence MAIFEVTLFAVNEFILLSLLG. Residues 173–176 lie on the Extracellular side of the membrane; sequence TKDA. The helical transmembrane segment at 177–197 threads the bilayer; that stretch reads GGSMTIHTFGAYFGLMVTRIL. Over 198-216 the chain is Cytoplasmic; sequence YRPNLDKSKHRNSSVYHSD. A helical membrane pass occupies residues 217 to 237; sequence LFAMIGTVYLWMFWPSFNSAI. Residues 238-247 lie on the Extracellular side of the membrane; that stretch reads TAHGDDQHRT. Residues 248–270 form a helical membrane-spanning segment; it reads ALNTYYSLAACTLATYGMSAITS. Topologically, residues 271–274 are cytoplasmic; the sequence is HDGK. The chain crosses the membrane as a helical span at residues 275–295; the sequence is LDMVHIQNAALAGGVAVGTAG. The Extracellular portion of the chain corresponds to 296–298; sequence EMM. The chain crosses the membrane as a helical span at residues 299 to 319; that stretch reads LTPFGSMIVGFMAGIISVLGF. Residues 320 to 340 lie on the Cytoplasmic side of the membrane; sequence KFLSPILEDKLKIQDTCGIHN. A helical transmembrane segment spans residues 341 to 361; that stretch reads LHGMPGVLGAIVGAVTAALAT. The Extracellular segment spans residues 362 to 391; sequence TDVYGQGMADVFPAVADGSVNATKQGGIQA. A helical transmembrane segment spans residues 392–412; it reads LSLAITLGIAVLGGLIVGFVL. Residues 413–458 are Cytoplasmic-facing; it reads KLPVFGTPPDTLCFEDSVYWEVPGSESPEEGELTSVKPEETEHLNS. Residues 436 to 458 form a disordered region; that stretch reads GSESPEEGELTSVKPEETEHLNS. Positions 449–458 are enriched in basic and acidic residues; that stretch reads KPEETEHLNS.

It belongs to the ammonium transporter (TC 2.A.49) family. Rh subfamily. As to expression, specifically expressed in the gill by pavement cells (at protein level).

The protein localises to the apicolateral cell membrane. It is found in the cytoplasmic vesicle membrane. In terms of biological role, functions as an ammonia transporter. May play a role in the elimination of ammonia in the gill. This is Ammonium transporter Rh type B (rhbg) from Takifugu rubripes (Japanese pufferfish).